The following is a 141-amino-acid chain: Single-stranded DNA-binding protein 2 (141 aa).

Residues 1 to 104 (MLNRTVLVGR…VVADSVQFLE (104 aa)) form the SSB domain. Residues 104–141 (EPKNNNQQQNNNYQQQRQTQTGNNPFDNNADSIEDLPF) form a disordered region. Positions 107–127 (NNNQQQNNNYQQQRQTQTGNN) are enriched in low complexity.

In terms of assembly, homotetramer.

This chain is Single-stranded DNA-binding protein 2 (ssb-p), found in Staphylococcus aureus (strain Mu50 / ATCC 700699).